A 398-amino-acid chain; its full sequence is Phospholipase C (398 aa).

Residues 1-28 (MKKKFLKGLCCAFVISITCLGASSKAYG) form the signal peptide. W29, H39, D84, H96, H154, D158, H164, H176, and E180 together coordinate Zn(2+). Positions 29–278 (WDGKKDGTGT…YDVSKDLLPT (250 aa)) constitute a Zn-dependent PLC domain. Residues 275–283 (LLPTENHKI) form a linker region. Residues 284 to 398 (NGLMVVIKTA…IHGNEKYYIN (115 aa)) form the PLAT domain. Ca(2+)-binding residues include G299, T300, D301, D321, N322, G324, N325, D326, and D364.

Belongs to the bacterial zinc-metallophospholipase C family. Requires Ca(2+) as cofactor. Zn(2+) serves as cofactor.

The protein resides in the secreted. The enzyme catalyses a 1,2-diacyl-sn-glycero-3-phosphocholine + H2O = phosphocholine + a 1,2-diacyl-sn-glycerol + H(+). In terms of biological role, bacterial hemolysins are exotoxins that attack blood cell membranes and cause cell rupture. Binds to eukaryotic membranes where it hydrolyzes phosphatidylcholine, sphingomyelin and phosphatidylethanolamine. The diacylglycerol produced can activate both the arachidonic acid pathway, leading to modulation of the inflammatory response cascade and thrombosis, and protein kinase C, leading to activation of eukaryotic phospholipases and further membrane damage. This enzyme is hemolytic against horse erythrocytes. This Clostridium novyi protein is Phospholipase C (plc).